The following is a 793-amino-acid chain: Protein smoothened (793 aa).

Positions 1–32 are cleaved as a signal peptide; sequence MAAGRPVRGPELAPRRLLQLLLLVLLGGPGRG. Residues 33-237 lie on the Extracellular side of the membrane; it reads AALSGNVTGP…EAEHQDMHSY (205 aa). Residues 35–61 form a disordered region; that stretch reads LSGNVTGPGPHSASGSSRRDVPVTSPP. Asn-38 is a glycosylation site (N-linked (GlcNAc...) asparagine). Cystine bridges form between Cys-68–Cys-182, Cys-74–Cys-138, Cys-82–Cys-131, Cys-122–Cys-158, and Cys-151–Cys-173. An FZ domain is found at 69 to 185; it reads GRAAHCEPLR…DHFPEGCPNE (117 aa). Asp-99 serves as a coordination point for cholesterol. Asn-192 is a glycosylation site (N-linked (GlcNAc...) asparagine). 3 disulfide bridges follow: Cys-197–Cys-217, Cys-221–Cys-299, and Cys-318–Cys-394. A helical transmembrane segment spans residues 238 to 258; it reads IAAFGAVTGLCTLFTLATFVA. Over 259–265 the chain is Cytoplasmic; the sequence is DWRNSNR. A helical membrane pass occupies residues 266-286; the sequence is YPAVILFYVNACFFVGSIGWL. The Extracellular segment spans residues 287–318; sequence AQFMDGARREIVCRADGTMRFGEPTSSETLSC. The helical transmembrane segment at 319 to 339 threads the bilayer; that stretch reads VIIFVIVYYALMAGVVWFVVL. Residues 340–362 are Cytoplasmic-facing; that stretch reads TYAWHTSFKALGTTYQPLSGKTS. A helical membrane pass occupies residues 363 to 383; the sequence is YFHLLTWSLPFVLTVAILAVA. The Extracellular portion of the chain corresponds to 384–406; the sequence is QVDGDSVSGICFVGYKNYRYRAG. Tyr-398 lines the cholesterol pocket. The helical transmembrane segment at 407 to 427 threads the bilayer; it reads FVLAPIGLVLIVGGYFLIRGV. The Cytoplasmic segment spans residues 428–455; that stretch reads MTLFSIKSNHPGLLSEKAASKINETMLR. Residues 456 to 476 form a helical membrane-spanning segment; sequence LGIFGFLAFGFVLITFSCHFY. The Extracellular portion of the chain corresponds to 477–528; it reads DFFNQAEWERSFRDYVLCQANVTIGLPTKKPIPDCEIKNRPSLLVEKINLFA. A disulfide bridge connects residues Cys-494 and Cys-511. The N-linked (GlcNAc...) asparagine glycan is linked to Asn-497. Residues 529–549 form a helical membrane-spanning segment; that stretch reads MFGTGIAMSTWVWTKATLLIW. An interaction with BBS5 and BBS7 region spans residues 542-573; that stretch reads TKATLLIWRRTWCRLTGHSDDEPKRIKKSKMI. Topologically, residues 550–793 are cytoplasmic; it reads RRTWCRLTGH…AEILDADSDF (244 aa). Phosphoserine is present on residues Ser-560, Ser-578, and Ser-594. The required for interaction with PRKACA stretch occupies residues 574-657; that stretch reads AKAFSKRREL…TPVPPEEQAN (84 aa). The interaction with DLG5 stretch occupies residues 585–597; that stretch reads QNPGQELSFSMHT. Position 597 is a phosphothreonine (Thr-597). Phosphoserine occurs at positions 599 and 642. Thr-644 and Thr-648 each carry phosphothreonine. Ser-666 bears the Phosphoserine mark. A compositionally biased stretch (basic residues) spans 674–684; sequence GRKKKRRKRKK. The interval 674-703 is disordered; that stretch reads GRKKKRRKRKKEVCPLRPAPELHHSAPVPA.

It belongs to the G-protein coupled receptor Fz/Smo family. As to quaternary structure, homodimer. Interacts (via C-terminus) with protein kinase A catalytic subunit PRKACA; interacts with free PRKACA subunits and the interaction leads to sequestration of PRKACA at the membrane, preventing PRKACA-mediated phosphorylation of GLI transcription factors. Interacts with ARRB2. Interacts with BBS5 and BBS7; the interactions are indicative for the association of SMO with the BBsome complex to facilitate ciliary localization of SMO. Interacts with KIF7, DLG5 and SDCBP. Interacts with GAS8/DRC4. Post-translationally, phosphorylation by GRK kinases is required for interaction with protein kinase A catalytic subunit PRKACA. During early somite stages of embryonic development, modestly up-regulated in the cells of the node (at protein level).

It is found in the cell membrane. The protein resides in the cell projection. It localises to the cilium. G protein-coupled receptor which associates with the patched protein (PTCH) to transduce hedgehog protein signaling. Binding of sonic hedgehog (SHH) to its receptor patched prevents inhibition of smoothened (SMO) by patched. When active, SMO binds to and sequesters protein kinase A catalytic subunit PRKACA at the cell membrane, preventing PRKACA-mediated phosphorylation of GLI transcription factors which releases the GLI proteins from PRKACA-mediated inhibition and allows for transcriptional activation of hedgehog pathway target genes. Required for the accumulation of KIF7, GLI2 and GLI3 in the cilia. Interacts with DLG5 at the ciliary base to induce the accumulation of KIF7 and GLI2 at the ciliary tip for GLI2 activation. This is Protein smoothened (Smo) from Mus musculus (Mouse).